Consider the following 661-residue polypeptide: MELAKIGDRLNNYYNNIYTLSEKLGYSFTKISFNNIILDALSGHQRKLEIKIINIESKCNELSSEISLLRKRLGIIEEIEIPRTLIDQYECLVTYHNGIRAIYNTKKNEAKNMYKEIERLSVILGESVDEVNFVNGDFEDISDIKLEQLSAKLNELHQIYRLRKEKNIEIKEELKKLQDSLSIKLSMPADDLSKNGIKHLIIYKEKLRFSLESRKSRVDEIVNEMKNMCGKNPTSELPTNYSDKTLTLWENELSSMRKVYFVKYKTEYEFLQKRYLSLARIMFVSKKEMLFTSQFKEIPNVNRELIQSMKQEIGNLEVDLHLQGELNNMIRRYLLLESRVYKESQRMKVLSGSASQPFTLKRLQKDFQLLKAKLICALREWEEDNEKKIYVFGKPLSSRLLMIHSPPILQNQENISSNDNSKSSPESSPPARKTTGKIENKKLRNIDVQSKKSIRFPLRLASHEEPLIDRMVNQSPDTRSVSKSKRLVRETSSGCLFKNHSKSNTLSPRRKGSRHGPREPCLSPDASSSSIPVTDIKEILPSQHDTPHNSVKLTGSSTTPASVSLRQMIEPLLSRTPPKGEFTNSLDDTPTQSNVEKVDRFLENHDWETCSESSSASEDQSLCKQLSSFSLSSSDISKKLKNNLNGLHFSSDEGSKLPTFL.

Coiled coils occupy residues Leu38–Glu78, Arg100–Ser121, Asp143–Lys184, Glu304–Leu320, and Leu360–Lys387. Disordered stretches follow at residues Gln410–Ile446, Leu467–Ser562, and Leu573–Gln592. A compositionally biased stretch (low complexity) spans Asn414–Pro430. Residues Gly436–Asn445 show a composition bias toward basic and acidic residues. Polar residues-rich tracts occupy residues Val472–Val481, His548–Ser562, and Phe582–Gln592.

This Schizosaccharomyces pombe (strain 972 / ATCC 24843) (Fission yeast) protein is Meiotic coiled-coil protein 1 (mcp1).